A 795-amino-acid chain; its full sequence is Phenylalanine--tRNA ligase beta subunit (795 aa).

In terms of domain architecture, tRNA-binding spans 39–148 (AGVFDGVKVG…ENAPIGMDFR (110 aa)). In terms of domain architecture, B5 spans 401-476 (PKPNQVALRR…RIYGYNNIPN (76 aa)). Mg(2+) is bound by residues aspartate 454, aspartate 460, glutamate 463, and glutamate 464. An FDX-ACB domain is found at 701–794 (SKFPANRRDI…VSAQFGAALR (94 aa)).

It belongs to the phenylalanyl-tRNA synthetase beta subunit family. Type 1 subfamily. As to quaternary structure, tetramer of two alpha and two beta subunits. Mg(2+) serves as cofactor.

It localises to the cytoplasm. The catalysed reaction is tRNA(Phe) + L-phenylalanine + ATP = L-phenylalanyl-tRNA(Phe) + AMP + diphosphate + H(+). This Vibrio cholerae serotype O1 (strain ATCC 39315 / El Tor Inaba N16961) protein is Phenylalanine--tRNA ligase beta subunit (pheT).